We begin with the raw amino-acid sequence, 169 residues long: Protein UL138 (169 aa).

Residues 8–28 form a helical membrane-spanning segment; it reads VGLPIIGVMLVLIVAILCYLA. The tract at residues 109-133 is disordered; that stretch reads DRRAGSSSSSSVHVANQRNSVPPPD.

Interacts with host TNFR1. Interacts with host MRP1. Interacts with host UAF1/WDR48. Interacts with host STING1.

Its subcellular location is the host Golgi apparatus membrane. Its function is as follows. Plays an important role in the establishment of latent viral infection. Modulates the expression of several host cell surface receptors such as TNFR1, CD36 or the MRP1 transporter during productive infection. For instance, associates with host MRP1 and induces its lysosomal degradation. Plays an inhibitory role in the host cGAS/STING/TBK1 pathway and upstream of IRF3 phosphorylation and NF-kappa-B leading to inhibition of interferon beta production during both lytic and latent infections. Also participates in the establishment of latency by sustaining an innate immune response through phosphorylation and activation of host STAT1. The polypeptide is Protein UL138 (UL138) (Human cytomegalovirus (strain Merlin) (HHV-5)).